The chain runs to 576 residues: MGFRINTNIGALNAHANSVVNSNELDKSLSRLSSGLRINSAADDASGMAIADSLRSQAATLGQAINNGNDAIGILQTADKAMDEQLKILDTIKTKATQAAQDGQSLKTRTMLQADINRLMEELDNIANTTSFNGKQLLSGNFTNQEFQIGASSNQTIKATIGATQSSKIGVTRFETGAQSFTSGVVGLTIKNYNGIEDFKFDNVVISTSVGTGLGALAEEINKSADKTGVRATYDVKTTGVYAIKEGTTSQDFAINGVVIGQINYKDGDNNGQLVSAINAVKDTTGVQASKDENGKLVLTSADGRGIKITGDIGVGSGILANQKENYGRLSLVKNDGRDINISGTNLSAIGMGTTDMISQSSVSLRESKGQISATNADAMGFNSYKGGGKFVFTQNVSSISAFMSAQGSGFSRGSGFSVGSGKNLSVGLSQGIQIISSAASMSNTYVVSAGSGFSSGSGNSQFAALKTTAANTTDETAGVTTLKGAMAVMDIAETAITNLDQIRADIGSVQNQLQVTINNITVTQVNVKAAESTIRDVDFASESANFSKYNILAQSGSYAMSQANAVQQNVLKLLQ.

The protein belongs to the bacterial flagellin family. Heteromer of FlaA and FlaB. Interacts with FliW. Interacts with FliS.

The protein resides in the secreted. The protein localises to the bacterial flagellum. In terms of biological role, flagellin is the subunit protein which polymerizes to form the filaments of bacterial flagella. This Campylobacter jejuni subsp. jejuni serotype O:6 (strain 81116 / NCTC 11828) protein is Flagellin B (flaB).